The following is a 480-amino-acid chain: Glutamate--tRNA ligase (480 aa).

Positions Pro-21 to Gly-31 match the 'HIGH' region motif. Residues Cys-110, Cys-112, Cys-137, and His-139 each contribute to the Zn(2+) site. The 'KMSKS' region motif lies at Lys-248–Arg-252. Lys-251 is an ATP binding site.

It belongs to the class-I aminoacyl-tRNA synthetase family. Glutamate--tRNA ligase type 1 subfamily. Monomer. Zn(2+) is required as a cofactor.

The protein localises to the cytoplasm. The enzyme catalyses tRNA(Glu) + L-glutamate + ATP = L-glutamyl-tRNA(Glu) + AMP + diphosphate. In terms of biological role, catalyzes the attachment of glutamate to tRNA(Glu) in a two-step reaction: glutamate is first activated by ATP to form Glu-AMP and then transferred to the acceptor end of tRNA(Glu). The sequence is that of Glutamate--tRNA ligase from Haemophilus influenzae (strain ATCC 51907 / DSM 11121 / KW20 / Rd).